Consider the following 176-residue polypeptide: tRNA (adenine(37)-N6)-methyltransferase (176 aa).

Positions 1-94 (SFSHIWVQFV…YLPFVEAQPD (94 aa)) constitute a TsaA-like domain. S-adenosyl-L-methionine-binding positions include H12, 12 to 13 (HG), R40, L50, and 74 to 77 (LDGT).

The protein belongs to the tRNA methyltransferase O family.

It carries out the reaction N(6)-L-threonylcarbamoyladenosine(37) in tRNA + S-adenosyl-L-methionine = N(6)-methyl,N(6)-L-threonylcarbamoyladenosine(37) in tRNA + S-adenosyl-L-homocysteine + H(+). In terms of biological role, S-adenosyl-L-methionine-dependent methyltransferase responsible for the addition of the methyl group in the formation of N6-methyl-N6-threonylcarbamoyladenosine at position 37 (m(6)t(6)A37) of the tRNA anticodon loop of tRNA(Thr)(GGU). The methyl group of m(6)t(6)A37 appears to slightly improve the efficiency of the tRNA decoding ability. Binds to tRNA. The polypeptide is tRNA (adenine(37)-N6)-methyltransferase (Eikenella corrodens).